Consider the following 208-residue polypeptide: Adenylyl-sulfate kinase (208 aa).

35–42 provides a ligand contact to ATP; that stretch reads GLSGSGKS. Residue serine 109 is the Phosphoserine intermediate of the active site.

Belongs to the APS kinase family.

The enzyme catalyses adenosine 5'-phosphosulfate + ATP = 3'-phosphoadenylyl sulfate + ADP + H(+). It functions in the pathway sulfur metabolism; hydrogen sulfide biosynthesis; sulfite from sulfate: step 2/3. Catalyzes the synthesis of activated sulfate. This Geotalea uraniireducens (strain Rf4) (Geobacter uraniireducens) protein is Adenylyl-sulfate kinase.